The chain runs to 226 residues: Flagellar L-ring protein (226 aa).

An N-terminal signal peptide occupies residues 1-15 (MKRLAVSILCLALAG). Cys16 carries the N-palmitoyl cysteine lipid modification. A lipid anchor (S-diacylglycerol cysteine) is attached at Cys16.

This sequence belongs to the FlgH family. As to quaternary structure, the basal body constitutes a major portion of the flagellar organelle and consists of four rings (L,P,S, and M) mounted on a central rod.

Its subcellular location is the cell outer membrane. The protein localises to the bacterial flagellum basal body. In terms of biological role, assembles around the rod to form the L-ring and probably protects the motor/basal body from shearing forces during rotation. The polypeptide is Flagellar L-ring protein (Geobacter metallireducens (strain ATCC 53774 / DSM 7210 / GS-15)).